The primary structure comprises 372 residues: Transaldolase (372 aa).

Catalysis depends on lysine 140, which acts as the Schiff-base intermediate with substrate.

This sequence belongs to the transaldolase family. Type 2 subfamily.

Its subcellular location is the cytoplasm. The enzyme catalyses D-sedoheptulose 7-phosphate + D-glyceraldehyde 3-phosphate = D-erythrose 4-phosphate + beta-D-fructose 6-phosphate. It functions in the pathway carbohydrate degradation; pentose phosphate pathway; D-glyceraldehyde 3-phosphate and beta-D-fructose 6-phosphate from D-ribose 5-phosphate and D-xylulose 5-phosphate (non-oxidative stage): step 2/3. Transaldolase is important for the balance of metabolites in the pentose-phosphate pathway. The polypeptide is Transaldolase (Acidothermus cellulolyticus (strain ATCC 43068 / DSM 8971 / 11B)).